The following is a 148-amino-acid chain: 3-dehydroquinate dehydratase (148 aa).

Y23 (proton acceptor) is an active-site residue. Residues N74, H80, and D87 each contribute to the substrate site. H100 (proton donor) is an active-site residue. Residues 101-102 (IS) and R111 each bind substrate.

This sequence belongs to the type-II 3-dehydroquinase family. As to quaternary structure, homododecamer.

The enzyme catalyses 3-dehydroquinate = 3-dehydroshikimate + H2O. It participates in metabolic intermediate biosynthesis; chorismate biosynthesis; chorismate from D-erythrose 4-phosphate and phosphoenolpyruvate: step 3/7. Catalyzes a trans-dehydration via an enolate intermediate. The sequence is that of 3-dehydroquinate dehydratase from Thermoanaerobacter pseudethanolicus (strain ATCC 33223 / 39E) (Clostridium thermohydrosulfuricum).